The sequence spans 225 residues: NAD(P)H-quinone oxidoreductase subunit K, chloroplastic (225 aa).

[4Fe-4S] cluster-binding residues include cysteine 43, cysteine 44, cysteine 108, and cysteine 139.

The protein belongs to the complex I 20 kDa subunit family. NDH is composed of at least 16 different subunits, 5 of which are encoded in the nucleus. [4Fe-4S] cluster is required as a cofactor.

The protein resides in the plastid. The protein localises to the chloroplast thylakoid membrane. It carries out the reaction a plastoquinone + NADH + (n+1) H(+)(in) = a plastoquinol + NAD(+) + n H(+)(out). The enzyme catalyses a plastoquinone + NADPH + (n+1) H(+)(in) = a plastoquinol + NADP(+) + n H(+)(out). Functionally, NDH shuttles electrons from NAD(P)H:plastoquinone, via FMN and iron-sulfur (Fe-S) centers, to quinones in the photosynthetic chain and possibly in a chloroplast respiratory chain. The immediate electron acceptor for the enzyme in this species is believed to be plastoquinone. Couples the redox reaction to proton translocation, and thus conserves the redox energy in a proton gradient. The protein is NAD(P)H-quinone oxidoreductase subunit K, chloroplastic of Daucus carota (Wild carrot).